Here is a 158-residue protein sequence, read N- to C-terminus: MTTVTLTSSDGVDITVDRDVAERSILIKNMLEDLGESDEAIPIPNVNEVVLKKVIEWCTHHKNDPPSTGDDDDSRRKTTDIDEWDQKFMQVDQEMLFEIILAANYLDIKALLDVGCKTVANMIKGKSPEEIRKTFNIQNDFTPEEEDQIRRENEWAEE.

The tract at residues 100–158 is interaction with the F-box domain of F-box proteins; that stretch reads ILAANYLDIKALLDVGCKTVANMIKGKSPEEIRKTFNIQNDFTPEEEDQIRRENEWAEE.

Belongs to the SKP1 family. In terms of assembly, component of the SCF (SKP1-CUL1-F-box protein) E3 ubiquitin ligase complexes.

It participates in protein modification; protein ubiquitination. Functionally, essential component of the SCF (SKP1-CUL1-F-box protein) E3 ubiquitin ligase complexes, which mediate the ubiquitination and subsequent proteasomal degradation of target proteins. Controls sulfur metabolite repression, probably by mediating the inactivation or degradation of the metR transcription factor. The sequence is that of E3 ubiquitin ligase complex SCF subunit sconC (sconC) from Aspergillus fumigatus (strain CBS 144.89 / FGSC A1163 / CEA10) (Neosartorya fumigata).